Consider the following 331-residue polypeptide: Pyruvate dehydrogenase E1 component subunit beta (331 aa).

E60 is a binding site for thiamine diphosphate. The K(+) site is built by L113, A161, I162, D164, and N166.

Heterodimer of an alpha and a beta chain. It depends on thiamine diphosphate as a cofactor.

It localises to the plastid. Its subcellular location is the chloroplast. The catalysed reaction is N(6)-[(R)-lipoyl]-L-lysyl-[protein] + pyruvate + H(+) = N(6)-[(R)-S(8)-acetyldihydrolipoyl]-L-lysyl-[protein] + CO2. In terms of biological role, the pyruvate dehydrogenase complex catalyzes the overall conversion of pyruvate to acetyl-CoA and CO(2). It contains multiple copies of three enzymatic components: pyruvate dehydrogenase (E1), dihydrolipoamide acetyltransferase (E2) and lipoamide dehydrogenase (E3). This is Pyruvate dehydrogenase E1 component subunit beta (pdhB) from Porphyra purpurea (Red seaweed).